The sequence spans 67 residues: Large ribosomal subunit protein bL35 (67 aa).

Belongs to the bacterial ribosomal protein bL35 family.

This chain is Large ribosomal subunit protein bL35, found in Acidiphilium cryptum (strain JF-5).